The primary structure comprises 316 residues: MLFILVLLTSFLSILYLTAPSIRKFFAGGVCTTNVQIPGKVVVITGANTGIGKETARELARRGARVYIACRDVLKGESAASEIRADTKNSQVLVRKLDLSDTKSIRAFAERFLAEEKKLHILINNAGVMMCPYSKTTDGFETHFGVNHLGHFLLTYLLLERLKESAPARVVNLSSIAHLIGKIRFHDLQGQKRYCSAFAYGHSKLANLLFTRELAKRLQGTGVTAYAVHPGVVLSEITRNSYLLCLLWRLFSPFFKSTSQGAQTSLHCALAEDLEPLSGKYFSDCKRMWVSSRARNKKTAERLWNVSCELLGIQWE.

Residue 46-52 (GANTGIG) coordinates NADP(+). Residue S175 participates in substrate binding. The active-site Proton acceptor is Y200.

The protein belongs to the short-chain dehydrogenases/reductases (SDR) family. In terms of tissue distribution, expressed in the inner segments of the photoreceptor in retina.

The catalysed reaction is all-trans-retinol + NADP(+) = all-trans-retinal + NADPH + H(+). It carries out the reaction 11-cis-retinol + NADP(+) = 11-cis-retinal + NADPH + H(+). The enzyme catalyses 9-cis-retinol + NADP(+) = 9-cis-retinal + NADPH + H(+). It catalyses the reaction a 4-hydroxynonen-1-ol + NADP(+) = a 4-hydroxynonenal + NADPH + H(+). The catalysed reaction is (E)-non-2-en-1-ol + NADP(+) = (E)-non-2-enal + NADPH + H(+). It carries out the reaction (Z)-non-6-en-1-ol + NADP(+) = (Z)-non-6-enal + NADPH + H(+). The enzyme catalyses nonan-1-ol + NADP(+) = nonanal + NADPH + H(+). The protein operates within cofactor metabolism; retinol metabolism. Functionally, retinoids dehydrogenase/reductase with a clear preference for NADP. Displays high activity towards 9-cis, 11-cis and all-trans-retinal. Shows very weak activity toward 13-cis-retinol. Also exhibits activity, albeit with lower affinity than for retinaldehydes, towards lipid peroxidation products (C9 aldehydes) such as 4-hydroxynonenal and trans-2-nonenal. Plays an important function in photoreceptor cells to detoxify 4-hydroxynonenal and potentially other toxic aldehyde products resulting from lipid peroxidation. Has no dehydrogenase activity towards steroids. The sequence is that of Retinol dehydrogenase 12 (Rdh12) from Mus musculus (Mouse).